The primary structure comprises 227 residues: NADH-quinone oxidoreductase subunit C (227 aa).

This sequence belongs to the complex I 30 kDa subunit family. In terms of assembly, NDH-1 is composed of 14 different subunits. Subunits NuoB, C, D, E, F, and G constitute the peripheral sector of the complex.

The protein localises to the cell inner membrane. It carries out the reaction a quinone + NADH + 5 H(+)(in) = a quinol + NAD(+) + 4 H(+)(out). In terms of biological role, NDH-1 shuttles electrons from NADH, via FMN and iron-sulfur (Fe-S) centers, to quinones in the respiratory chain. The immediate electron acceptor for the enzyme in this species is believed to be ubiquinone. Couples the redox reaction to proton translocation (for every two electrons transferred, four hydrogen ions are translocated across the cytoplasmic membrane), and thus conserves the redox energy in a proton gradient. The chain is NADH-quinone oxidoreductase subunit C from Coxiella burnetii (strain RSA 331 / Henzerling II).